A 273-amino-acid polypeptide reads, in one-letter code: Urease accessory protein UreD (273 aa).

The protein belongs to the UreD family. As to quaternary structure, ureD, UreF and UreG form a complex that acts as a GTP-hydrolysis-dependent molecular chaperone, activating the urease apoprotein by helping to assemble the nickel containing metallocenter of UreC. The UreE protein probably delivers the nickel.

It is found in the cytoplasm. Its function is as follows. Required for maturation of urease via the functional incorporation of the urease nickel metallocenter. The sequence is that of Urease accessory protein UreD from Rhizobium leguminosarum bv. trifolii (strain WSM2304).